The chain runs to 349 residues: Transmembrane protein 255A (349 aa).

4 helical membrane passes run 30-50, 57-77, 89-109, and 226-246; these read IYVTVTLLIVSVLILTVGLAA, VTVGGYYPGVILGFGSFLGII, LVASIVFISFGVIAAFCCAIV, and TILNIVGLFLGIITAAVLGGF. The disordered stretch occupies residues 303-329; sequence PSSPPSGLSDEPQSASPSPSYMWSSSA. A compositionally biased stretch (low complexity) spans 316-329; that stretch reads SASPSPSYMWSSSA.

This sequence belongs to the TMEM255 family.

The protein localises to the membrane. The protein is Transmembrane protein 255A (TMEM255A) of Homo sapiens (Human).